A 525-amino-acid polypeptide reads, in one-letter code: Light-independent protochlorophyllide reductase subunit B (525 aa).

A [4Fe-4S] cluster-binding site is contributed by D36. D292 functions as the Proton donor in the catalytic mechanism. Position 428-429 (G428–L429) interacts with substrate. Residues P447–E470 are disordered. Residues A460–E470 show a composition bias toward low complexity.

Belongs to the ChlB/BchB/BchZ family. In terms of assembly, protochlorophyllide reductase is composed of three subunits; BchL, BchN and BchB. Forms a heterotetramer of two BchB and two BchN subunits. [4Fe-4S] cluster is required as a cofactor.

The enzyme catalyses chlorophyllide a + oxidized 2[4Fe-4S]-[ferredoxin] + 2 ADP + 2 phosphate = protochlorophyllide a + reduced 2[4Fe-4S]-[ferredoxin] + 2 ATP + 2 H2O. It participates in porphyrin-containing compound metabolism; bacteriochlorophyll biosynthesis (light-independent). Functionally, component of the dark-operative protochlorophyllide reductase (DPOR) that uses Mg-ATP and reduced ferredoxin to reduce ring D of protochlorophyllide (Pchlide) to form chlorophyllide a (Chlide). This reaction is light-independent. The NB-protein (BchN-BchB) is the catalytic component of the complex. This Chlorobium luteolum (strain DSM 273 / BCRC 81028 / 2530) (Pelodictyon luteolum) protein is Light-independent protochlorophyllide reductase subunit B.